Reading from the N-terminus, the 447-residue chain is Phosphoglucosamine mutase (447 aa).

Residue serine 107 is the Phosphoserine intermediate of the active site. Mg(2+) is bound by residues serine 107, aspartate 246, aspartate 248, and aspartate 250. The residue at position 107 (serine 107) is a Phosphoserine.

Belongs to the phosphohexose mutase family. The cofactor is Mg(2+). Post-translationally, activated by phosphorylation.

It catalyses the reaction alpha-D-glucosamine 1-phosphate = D-glucosamine 6-phosphate. Its function is as follows. Catalyzes the conversion of glucosamine-6-phosphate to glucosamine-1-phosphate. This chain is Phosphoglucosamine mutase, found in Ralstonia pickettii (strain 12J).